A 337-amino-acid polypeptide reads, in one-letter code: D-alanine--D-alanine ligase (337 aa).

Positions 124–330 (KMWFSALGIP…FTEYLSLVIN (207 aa)) constitute an ATP-grasp domain. Residue 154–209 (ALAQWGSIFVKAASQGSSVGCYKVDDSAKVAGVLKDAFGYAPYVIVEKTIKARELE) coordinates ATP. Residues Asp284, Glu297, and Asn299 each contribute to the Mg(2+) site.

This sequence belongs to the D-alanine--D-alanine ligase family. It depends on Mg(2+) as a cofactor. Mn(2+) is required as a cofactor.

The protein localises to the cytoplasm. The catalysed reaction is 2 D-alanine + ATP = D-alanyl-D-alanine + ADP + phosphate + H(+). The protein operates within cell wall biogenesis; peptidoglycan biosynthesis. Its function is as follows. Cell wall formation. The sequence is that of D-alanine--D-alanine ligase from Shewanella baltica (strain OS223).